A 506-amino-acid polypeptide reads, in one-letter code: MSAITESKPTRRWAMPDTLVIIFFVAILTSLATWVVPVGMFDSQEVQYQVDGQTKTRKVVDPHSFRILTNEAGEPEYHRVQLFTTGDERPGLMNFPFEGLTSGSKYGTAVGIIMFMLVIGGAFGIVMRTGTIDNGILALIRHTRGNEILFIPALFILFSLGGAVFGMGEEAVAFAIIIAPLMVRLGYDSITTVLVTYIATQIGFASSWMNPFCVVVAQGIAGVPVLSGSGLRIVVWVIATLIGLIFTMVYASRVKKNPLLSRVHESDRFFREKQADVEQRPFTFGDWLVLIVLTAVMVWVIWGVIVNAWFIPEIASQFFTMGLVIGIIGVVFRLNGMTVNTMASSFTEGARMMIAPALLVGFAKGILLLVGNGEAGDASVLNTILNSIANAISGLDNAVAAWFMLLFQAVFNFFVTSGSGQAALTMPLLAPLGDLVGVNRQVTVLAFQFGDGFSHIIYPTSASLMATLGVCRVDFRNWLKVGATLLGLLFIMSSVVVIGAQLMGYH.

13 consecutive transmembrane segments (helical) span residues 19–39 (LVIIFFVAILTSLATWVVPVG), 107–127 (GTAVGIIMFMLVIGGAFGIVM), 148–168 (ILFIPALFILFSLGGAVFGMG), 171–191 (AVAFAIIIAPLMVRLGYDSIT), 208–228 (WMNPFCVVVAQGIAGVPVLSG), 231–251 (LRIVVWVIATLIGLIFTMVYA), 287–307 (WLVLIVLTAVMVWVIWGVIVN), 310–330 (FIPEIASQFFTMGLVIGIIGV), 352–372 (MMIAPALLVGFAKGILLLVGN), 398–418 (AVAAWFMLLFQAVFNFFVTSG), 419–439 (SGQAALTMPLLAPLGDLVGVN), 442–462 (VTVLAFQFGDGFSHIIYPTSA), and 485–505 (LLGLLFIMSSVVVIGAQLMGY).

To H.influenzae HI_0594. The protein to B.subtilis YcgA.

The protein resides in the cell inner membrane. Metabolomic profiling of different yfcC over-expression and deletion strains suggests that it may affect the glyoxylate shunt. This is Putative basic amino acid antiporter YfcC (yfcC) from Escherichia coli (strain K12).